The primary structure comprises 122 residues: Large ribosomal subunit protein bL12 (122 aa).

Belongs to the bacterial ribosomal protein bL12 family. As to quaternary structure, homodimer. Part of the ribosomal stalk of the 50S ribosomal subunit. Forms a multimeric L10(L12)X complex, where L10 forms an elongated spine to which 2 to 4 L12 dimers bind in a sequential fashion. Binds GTP-bound translation factors.

In terms of biological role, forms part of the ribosomal stalk which helps the ribosome interact with GTP-bound translation factors. Is thus essential for accurate translation. In Latilactobacillus sakei subsp. sakei (strain 23K) (Lactobacillus sakei subsp. sakei), this protein is Large ribosomal subunit protein bL12.